Consider the following 437-residue polypeptide: Sperm-associated antigen 4 protein (437 aa).

The span at 1-12 (MRRSSRPGSASS) shows a compositional bias: low complexity. Positions 1–88 (MRRSSRPGSA…KPAPRSHNWQ (88 aa)) are disordered. Polar residues-rich tracts occupy residues 19-31 (NFFS…SITS) and 72-88 (WAGS…HNWQ). The next 2 membrane-spanning stretches (helical) occupy residues 135-155 (FLSL…DVLV) and 166-186 (FLFT…LGLL). The stretch at 197–244 (KEMLTLSEYHERVRSQGQQLQQLQAELDKLHKEVSTVRAANSERVAKL) forms a coiled coil. An SUN domain is found at 265–425 (GASIDLQKTS…YRVRAHGVRT (161 aa)).

Homodimer. Interacts with ODF1. May associate with microtubules. Interacts with SUN3 and SYNE1; suggesting the formation of a spermatogenesis-specific LINC complex; a SUN domain-based heterotrimer with SUN3 may associate with SYNE1. Interacts with SEPT12 and LMNB1; during spermatogenesis. As to expression, predominantly epressed in testis. Expressed in ejaculated spermatozoa (at protein level).

The protein resides in the membrane. Its subcellular location is the cytoplasm. It localises to the cytoskeleton. The protein localises to the flagellum axoneme. It is found in the nucleus envelope. The protein resides in the nucleus inner membrane. Functionally, involved in spermatogenesis. Required for sperm head formation but not required to establish and maintain general polarity of the sperm head. Required for anchoring and organization of the manchette. Required for targeting of SUN3 and probably SYNE1 through a probable SUN1:SYNE3 LINC complex to the nuclear envelope and involved in accurate posterior sperm head localization of the complex. May anchor SUN3 the nuclear envelope. Involved in maintenance of the nuclear envelope integrity. May assist the organization and assembly of outer dense fibers (ODFs), a specific structure of the sperm tail. This is Sperm-associated antigen 4 protein (SPAG4) from Homo sapiens (Human).